A 426-amino-acid polypeptide reads, in one-letter code: Trigger factor (426 aa).

Residues 160–240 (GDTVIGDVTK…IKEVKHLELP (81 aa)) form the PPIase FKBP-type domain.

Belongs to the FKBP-type PPIase family. Tig subfamily.

It is found in the cytoplasm. The catalysed reaction is [protein]-peptidylproline (omega=180) = [protein]-peptidylproline (omega=0). In terms of biological role, involved in protein export. Acts as a chaperone by maintaining the newly synthesized protein in an open conformation. Functions as a peptidyl-prolyl cis-trans isomerase. The chain is Trigger factor from Chlorobaculum tepidum (strain ATCC 49652 / DSM 12025 / NBRC 103806 / TLS) (Chlorobium tepidum).